Consider the following 515-residue polypeptide: Maturase K (515 aa).

The protein belongs to the intron maturase 2 family. MatK subfamily.

The protein localises to the plastid. It localises to the chloroplast. Its function is as follows. Usually encoded in the trnK tRNA gene intron. Probably assists in splicing its own and other chloroplast group II introns. This is Maturase K from Sorghum bicolor (Sorghum).